Reading from the N-terminus, the 344-residue chain is Protein RecA (344 aa).

65 to 72 provides a ligand contact to ATP; it reads GPESSGKT.

This sequence belongs to the RecA family.

Its subcellular location is the cytoplasm. Its function is as follows. Can catalyze the hydrolysis of ATP in the presence of single-stranded DNA, the ATP-dependent uptake of single-stranded DNA by duplex DNA, and the ATP-dependent hybridization of homologous single-stranded DNAs. It interacts with LexA causing its activation and leading to its autocatalytic cleavage. In Campylobacter lari, this protein is Protein RecA.